Consider the following 308-residue polypeptide: Small ribosomal subunit protein uS2 (308 aa).

Ser-2 carries the post-translational modification N-acetylserine. 2 laminin-binding regions span residues 161-180 (IPCN…MLAR) and 205-229 (RDPE…EFQG). [DE]-W-[ST] repeat units follow at residues 230 to 232 (EWT), 245 to 247 (DWS), 279 to 281 (DWS), 288 to 290 (DWS), and 306 to 308 (DWS). Residues 242-308 (EVADWSEGVQ…DWGGATADWS (67 aa)) are laminin-binding. The segment at 262 to 308 (AGIEAPGKPAPAEVYAEDWSAQPATEDWSAAPTAQAGDWGGATADWS) is disordered.

The protein belongs to the universal ribosomal protein uS2 family. In terms of assembly, monomer (37LRP) and homodimer (67LR). Component of the small ribosomal subunit. Mature ribosomes consist of a small (40S) and a large (60S) subunit. The 40S subunit contains about 33 different proteins and 1 molecule of RNA (18S). The 60S subunit contains about 49 different proteins and 3 molecules of RNA (28S, 5.8S and 5S). Interacts with rps21. Interacts with several laminins including at least lamb1. Interacts with mdk. In terms of processing, acylated. Acylation may be a prerequisite for conversion of the monomeric 37 kDa laminin receptor precursor (37LRP) to the mature dimeric 67 kDa laminin receptor (67LR), and may provide a mechanism for membrane association. Cleaved by stromelysin-3 (ST3) at the cell surface. Cleavage by stromelysin-3 may be a mechanism to alter cell-extracellular matrix interactions.

It localises to the cell membrane. The protein localises to the cytoplasm. The protein resides in the nucleus. Functionally, required for the assembly and/or stability of the 40S ribosomal subunit. Required for the processing of the 20S rRNA-precursor to mature 18S rRNA in a late step of the maturation of 40S ribosomal subunits. Also functions as a cell surface receptor for laminin. Plays a role in cell adhesion to the basement membrane and in the consequent activation of signaling transduction pathways. May play a role in cell fate determination and tissue morphogenesis. This is Small ribosomal subunit protein uS2 (rpsa) from Danio rerio (Zebrafish).